The primary structure comprises 213 residues: N-(5'-phosphoribosyl)anthranilate isomerase (213 aa).

Belongs to the TrpF family.

It carries out the reaction N-(5-phospho-beta-D-ribosyl)anthranilate = 1-(2-carboxyphenylamino)-1-deoxy-D-ribulose 5-phosphate. Its pathway is amino-acid biosynthesis; L-tryptophan biosynthesis; L-tryptophan from chorismate: step 3/5. The protein is N-(5'-phosphoribosyl)anthranilate isomerase of Methanocella arvoryzae (strain DSM 22066 / NBRC 105507 / MRE50).